Reading from the N-terminus, the 283-residue chain is 1-deoxypentalenic acid 11-beta-hydroxylase (283 aa).

A substrate-binding site is contributed by Arg-117. The Fe cation site is built by His-135 and Asp-137. 2-oxoglutarate contacts are provided by residues 135 to 137 (HQD) and Trp-151. Arg-186 is a substrate binding site. His-224 is a binding site for Fe cation. The 2-oxoglutarate site is built by Ser-226 and Arg-238. Residues 260–283 (WPESAKDASKGILSKITGTPTTAE) form a disordered region.

The protein belongs to the PhyH family. It depends on Fe cation as a cofactor. The cofactor is L-ascorbate.

It catalyses the reaction 1-deoxypentalenate + 2-oxoglutarate + O2 = 1-deoxy-11beta-hydroxypentalenate + succinate + CO2. The protein operates within antibiotic biosynthesis; pentalenolactone biosynthesis. Catalyzes the conversion of 1-deoxypentalenic acid to 11-beta-hydroxy-1-deoxypentalenic acid in the biosynthesis of pentalenolactone antibiotic. In Streptomyces exfoliatus (Streptomyces hydrogenans), this protein is 1-deoxypentalenic acid 11-beta-hydroxylase (penH).